Here is a 47-residue protein sequence, read N- to C-terminus: CLSVCSMEYWPVCGSDGKTYPNECHLTSEACMSNTDITVAHVGKCDQ.

Cystine bridges form between Cys-1–Cys-31, Cys-5–Cys-24, and Cys-13–Cys-45. In terms of domain architecture, Kazal-like spans 1–47 (CLSVCSMEYWPVCGSDGKTYPNECHLTSEACMSNTDITVAHVGKCDQ).

Belongs to the conopeptide P-like superfamily. Expressed by the venom duct.

The protein localises to the secreted. Functionally, acts as a neurotoxin by inhibiting an ion channel. May also act as a serine protease inhibitor, since it possess the kazal serine protease inhibitor signature. This Iotyrris cingulifera (Sea snail) protein is Turripeptide Ici9.1.